The sequence spans 136 residues: Methylglyoxal synthase (136 aa).

The 136-residue stretch at 1-136 (MKIALIAHDR…REVVREENEA (136 aa)) folds into the MGS-like domain. Residues His8, Lys12, 34–37 (TGTT), and 54–55 (SG) contribute to the substrate site. Asp60 functions as the Proton donor/acceptor in the catalytic mechanism. Substrate is bound at residue His87.

The protein belongs to the methylglyoxal synthase family.

It catalyses the reaction dihydroxyacetone phosphate = methylglyoxal + phosphate. Its function is as follows. Catalyzes the formation of methylglyoxal from dihydroxyacetone phosphate. This is Methylglyoxal synthase from Brevibacillus brevis (strain 47 / JCM 6285 / NBRC 100599).